The sequence spans 313 residues: Acetyl-coenzyme A carboxylase carboxyl transferase subunit beta (313 aa).

The region spanning 24–293 is the CoA carboxyltransferase N-terminal domain; sequence LWIKCPDSGQ…LETASKSVQP (270 aa).

The protein belongs to the AccD/PCCB family. In terms of assembly, acetyl-CoA carboxylase is a heterohexamer composed of biotin carboxyl carrier protein (AccB), biotin carboxylase (AccC) and two subunits each of ACCase subunit alpha (AccA) and ACCase subunit beta (AccD).

Its subcellular location is the cytoplasm. It carries out the reaction N(6)-carboxybiotinyl-L-lysyl-[protein] + acetyl-CoA = N(6)-biotinyl-L-lysyl-[protein] + malonyl-CoA. It functions in the pathway lipid metabolism; malonyl-CoA biosynthesis; malonyl-CoA from acetyl-CoA: step 1/1. Its function is as follows. Component of the acetyl coenzyme A carboxylase (ACC) complex. Biotin carboxylase (BC) catalyzes the carboxylation of biotin on its carrier protein (BCCP) and then the CO(2) group is transferred by the transcarboxylase to acetyl-CoA to form malonyl-CoA. The protein is Acetyl-coenzyme A carboxylase carboxyl transferase subunit beta of Bradyrhizobium diazoefficiens (strain JCM 10833 / BCRC 13528 / IAM 13628 / NBRC 14792 / USDA 110).